The sequence spans 371 residues: N-methyl-L-tryptophan oxidase (371 aa).

4–34 (DLIVIGSGSVGSAAGYYASQAGLNVLMIDSA) contacts FAD. C307 is subject to S-8alpha-FAD cysteine.

The protein belongs to the MSOX/MTOX family. MTOX subfamily. As to quaternary structure, monomer. It depends on FAD as a cofactor.

The catalysed reaction is N(alpha)-methyl-L-tryptophan + O2 + H2O = L-tryptophan + formaldehyde + H2O2. In terms of biological role, catalyzes the oxidative demethylation of N-methyl-L-tryptophan. This is N-methyl-L-tryptophan oxidase from Yersinia pseudotuberculosis serotype O:1b (strain IP 31758).